Here is a 132-residue protein sequence, read N- to C-terminus: MVDQLQGTWKSVSCDNFENYMKELGVGRASRKLGCLAKPTVTISTDGDLITIKTKSIFKNKEISFKLGEEFEETTPSGRKSKSTVILDNDSLVQVQDWDGKEATICRRLVDGKMVVESAVNNVTCTRTYQRV.

Residues Arg-107 and 127-129 contribute to the a fatty acid site; that span reads RTY.

This sequence belongs to the calycin superfamily. Fatty-acid binding protein (FABP) family. In terms of tissue distribution, highly expressed in adult retina and testis.

May play a role in lipid transport. This Mus musculus (Mouse) protein is Fatty acid-binding protein 12 (Fabp12).